Here is a 489-residue protein sequence, read N- to C-terminus: Glycogen synthase (489 aa).

Lys-15 is a binding site for ADP-alpha-D-glucose.

This sequence belongs to the glycosyltransferase 1 family. Bacterial/plant glycogen synthase subfamily.

It catalyses the reaction [(1-&gt;4)-alpha-D-glucosyl](n) + ADP-alpha-D-glucose = [(1-&gt;4)-alpha-D-glucosyl](n+1) + ADP + H(+). Its pathway is glycan biosynthesis; glycogen biosynthesis. Synthesizes alpha-1,4-glucan chains using ADP-glucose. The chain is Glycogen synthase from Francisella tularensis subsp. holarctica (strain FTNF002-00 / FTA).